The following is a 380-amino-acid chain: Alcohol dehydrogenase (380 aa).

8 residues coordinate Zn(2+): Cys48, Thr50, His70, Cys100, Cys103, Cys106, Cys114, and Cys178. Residues Thr50 and His70 each contribute to the an alcohol site. Thr50 serves as a coordination point for NAD(+). NAD(+)-binding positions include 203–208, Asp227, Arg232, Thr273, Val296, 296–298, Phe323, and Arg373; these read GLGAVG and VGV.

This sequence belongs to the zinc-containing alcohol dehydrogenase family. As to quaternary structure, homodimer. Requires Zn(2+) as cofactor.

Its subcellular location is the cytoplasm. It catalyses the reaction a primary alcohol + NAD(+) = an aldehyde + NADH + H(+). It carries out the reaction a secondary alcohol + NAD(+) = a ketone + NADH + H(+). The protein is Alcohol dehydrogenase (ADH) of Malus domestica (Apple).